We begin with the raw amino-acid sequence, 313 residues long: Porphobilinogen deaminase (313 aa).

An S-(dipyrrolylmethanemethyl)cysteine modification is found at Cys242.

Belongs to the HMBS family. Monomer. Requires dipyrromethane as cofactor.

The catalysed reaction is 4 porphobilinogen + H2O = hydroxymethylbilane + 4 NH4(+). It participates in porphyrin-containing compound metabolism; protoporphyrin-IX biosynthesis; coproporphyrinogen-III from 5-aminolevulinate: step 2/4. Tetrapolymerization of the monopyrrole PBG into the hydroxymethylbilane pre-uroporphyrinogen in several discrete steps. The sequence is that of Porphobilinogen deaminase from Yersinia enterocolitica serotype O:8 / biotype 1B (strain NCTC 13174 / 8081).